A 409-amino-acid chain; its full sequence is Na(+)-translocating NADH-quinone reductase subunit F (409 aa).

A helical membrane pass occupies residues 5 to 25; that stretch reads FIFGIIAFTALVLVLAVIILF. One can recognise a 2Fe-2S ferredoxin-type domain in the interval 34–128; the sequence is GDITISINDD…SMDVELPEEI (95 aa). [2Fe-2S] cluster is bound by residues C71, C77, C80, and C112. Residues 131–271 enclose the FAD-binding FR-type domain; sequence VKKWECTVIS…SGPFGEFFAK (141 aa).

This sequence belongs to the NqrF family. Composed of six subunits; NqrA, NqrB, NqrC, NqrD, NqrE and NqrF. [2Fe-2S] cluster serves as cofactor. FAD is required as a cofactor.

It localises to the cell inner membrane. It carries out the reaction a ubiquinone + n Na(+)(in) + NADH + H(+) = a ubiquinol + n Na(+)(out) + NAD(+). Functionally, NQR complex catalyzes the reduction of ubiquinone-1 to ubiquinol by two successive reactions, coupled with the transport of Na(+) ions from the cytoplasm to the periplasm. The first step is catalyzed by NqrF, which accepts electrons from NADH and reduces ubiquinone-1 to ubisemiquinone by a one-electron transfer pathway. The polypeptide is Na(+)-translocating NADH-quinone reductase subunit F (Haemophilus ducreyi (strain 35000HP / ATCC 700724)).